The primary structure comprises 164 residues: B-phycoerythrin alpha chain (164 aa).

Cys82 and Cys139 together coordinate (2R,3E)-phycoerythrobilin.

This sequence belongs to the phycobiliprotein family. As to quaternary structure, heteromer of 6 alpha, 6 beta and one gamma chain. Post-translationally, contains two covalently linked bilin chromophores.

It localises to the plastid. The protein resides in the chloroplast thylakoid membrane. In terms of biological role, light-harvesting photosynthetic bile pigment-protein from the phycobiliprotein complex. In Rhodella violacea (Red alga), this protein is B-phycoerythrin alpha chain (cpeA).